The sequence spans 1382 residues: ABC-type transporter atr1 (1382 aa).

Positions 1–12 are enriched in basic and acidic residues; the sequence is MRFRSDSRADHQ. The tract at residues 1 to 56 is disordered; that stretch reads MRFRSDSRADHQHPKKQGSMDPDTIQALKYQDRSSSSSSNNKPKEKVGSASTSPSP. N-linked (GlcNAc...) asparagine glycosylation is present at asparagine 62. 6 consecutive transmembrane segments (helical) span residues 101–121, 159–179, 233–253, 259–279, 339–359, and 374–394; these read LFGT…NIFI, LILL…MAVF, LPMA…AFAF, LVLL…GALT, GVGV…AFFY, and IVSV…LFSM. The ABC transmembrane type-1 1 domain maps to 101–400; that stretch reads LFGTGMAIAA…LFSMIENFTM (300 aa). Asparagine 397 is a glycosylation site (N-linked (GlcNAc...) asparagine). The region spanning 445–688 is the ABC transporter 1 domain; that stretch reads LKLDHVHFAY…PNGTFASMLR (244 aa). 480-487 lines the ATP pocket; sequence GLSGSGKS. Asparagine 680 carries N-linked (GlcNAc...) asparagine glycosylation. The tract at residues 738–768 is disordered; it reads SVKPKDPSKNFEPPGESYASPAADGVKQDAP. The ABC transmembrane type-1 2 domain occupies 797-1094; sequence LGSLCAAIIG…IFNYSADFSS (298 aa). The chain crosses the membrane as a helical span at residues 800-820; it reads LCAAIIGAVYPVYAILFGTAI. N-linked (GlcNAc...) asparagine glycosylation is present at asparagine 827. The chain crosses the membrane as a helical span at residues 848–868; sequence ISSGSFFIVAVGCAFISFYHV. N-linked (GlcNAc...) asparagine glycosylation is present at asparagine 903. A run of 2 helical transmembrane segments spans residues 911–931 and 951–973; these read SLSV…GSIV and LALV…LRVL. A glycan (N-linked (GlcNAc...) asparagine) is linked at asparagine 1020. 2 helical membrane passes run 1034 to 1054 and 1067 to 1087; these read VLFG…FWYG and GFFT…NIFN. An ABC transporter 2 domain is found at 1136–1377; the sequence is IALKEVTFRY…DGLFALMARL (242 aa). 1171-1178 is an ATP binding site; the sequence is GGSGSGKS. The N-linked (GlcNAc...) asparagine glycan is linked to asparagine 1324.

It belongs to the ABC transporter superfamily. ABCB family. Multidrug resistance exporter (TC 3.A.1.201) subfamily.

Its subcellular location is the cell membrane. In terms of biological role, ABC-type transporter; part of the gene cluster that mediates the biosynthesis of the glycolipid biosurfactant ustilagic acid (UA). UA is a secreted cellobiose glycolipid that is toxic for many microorganisms and confers biocontrol activity to U.maydis. Export of UA is presumably catalyzed by the ABC transporter atr1. Atr1 appears to be quite unspecific, as many of the UA derivatives produced by cluster mutant strains are readily exported. The sequence is that of ABC-type transporter atr1 from Mycosarcoma maydis (Corn smut fungus).